The primary structure comprises 107 residues: Integration host factor subunit beta (107 aa).

The segment covering 82 to 101 (PGKELRERVDRRAGEPLKAE) has biased composition (basic and acidic residues). Positions 82–107 (PGKELRERVDRRAGEPLKAEEPDDDL) are disordered.

The protein belongs to the bacterial histone-like protein family. As to quaternary structure, heterodimer of an alpha and a beta chain.

This protein is one of the two subunits of integration host factor, a specific DNA-binding protein that functions in genetic recombination as well as in transcriptional and translational control. This Paraburkholderia phytofirmans (strain DSM 17436 / LMG 22146 / PsJN) (Burkholderia phytofirmans) protein is Integration host factor subunit beta.